A 443-amino-acid chain; its full sequence is C4-dicarboxylate transport protein (443 aa).

9 helical membrane-spanning segments follow: residues 17–37 (PFYSHLYVQVLAAIAAGILLG), 57–77 (LVKMVIAPVIFLTVATGIAGM), 92–112 (LYFLTFSTLALVIGMIVANVV), 139–159 (EQSIVGFLTNIIPTTIVGAFA), 161–181 (GDILQVLFFSVLFGIALAMVG), 201–221 (LVGILMKAAPIGAFGAMAFTI), 234–254 (MLIGTFYITSLLFVLVVLGAV), 320–340 (IYMTLAALFIAQATGIQLSWG), and 368–388 (AATLSVVPSVPVAGMALILGI).

It belongs to the dicarboxylate/amino acid:cation symporter (DAACS) (TC 2.A.23) family.

Its subcellular location is the cell inner membrane. Functionally, responsible for the transport of dicarboxylates such as succinate, fumarate, and malate from the periplasm across the membrane. The chain is C4-dicarboxylate transport protein from Rhizobium etli (strain ATCC 51251 / DSM 11541 / JCM 21823 / NBRC 15573 / CFN 42).